The primary structure comprises 1248 residues: Ankyrin repeat and sterile alpha motif domain-containing protein 1B (1248 aa).

ANK repeat units follow at residues 2 to 31 (GKDQELLEAARTGNVALVEKLLSGRKGGIL), 58 to 87 (SGYTALHHAALNGHKDIVLKLLQYEASTNV), 91 to 120 (KGYFPIHLAAWKGDVEIVKILIHHGPSHSR), 127 to 156 (ENETALHCAAQYGHSEVVAVLLEELTDPTI), 160 to 189 (KLETPLDLAALYGRLRVVKMIISAHPNLMS), 193 to 222 (RKHTPLHLAARNGHKAVVQVLLEAGMDVSC), and 225 to 254 (EKGSALHEAALFGKVDVVRVLLETGIDANI). Positions 296–322 (EPVQEDATQETHISSPVESPSQKTKSE) are disordered. Residues 305 to 322 (ETHISSPVESPSQKTKSE) show a composition bias toward polar residues. Residues Ser309, Ser310, Ser314, Ser353, and Ser364 each carry the phosphoserine modification. 3 disordered regions span residues 367 to 400 (ELGKNGSQSVRTSSTINLSPGEVEEEDDDENTCG), 474 to 514 (APSP…PDTA), and 558 to 623 (SFTA…ENPF). The segment covering 371 to 384 (NGSQSVRTSSTINL) has biased composition (polar residues). Positions 388–397 (EVEEEDDDEN) are enriched in acidic residues. Residue Thr503 is modified to Phosphothreonine. A phosphoserine mark is found at Ser507 and Ser510. Positions 558–575 (SFTASPPASPPTSSVGTT) are enriched in low complexity. Positions 577–601 (VKNEGTNHTDDLSRQDDNDPPKEYD) are enriched in basic and acidic residues. Residue Ser738 is modified to Phosphoserine. The segment at 749 to 777 (EKTSRVNWSESSTAEHSSKGNSERTPSFT) is disordered. A compositionally biased stretch (polar residues) spans 753–763 (RVNWSESSTAE). Thr773 is modified (phosphothreonine). Ser775 bears the Phosphoserine mark. 2 SAM domains span residues 810-876 (CPVQ…LPKM) and 884-949 (YHPT…RLHD). Position 901 is a phosphotyrosine (Tyr901). A Nuclear localization signal motif is present at residues 935–938 (HRKR). Positions 944 to 989 (GDRLHDDPPQKPPRSITLREPSGNHTPPQLSPSLSQSTYTTGGSLD) are disordered. Positions 969–984 (TPPQLSPSLSQSTYTT) are enriched in low complexity. The residue at position 974 (Ser974) is a Phosphoserine. The residue at position 1007 (Tyr1007) is a Phosphotyrosine. The PID domain occupies 1056–1213 (IFQSCDYKAF…SFENKPSKPI (158 aa)). Positions 1197–1248 (HSSTLPESFENKPSKPIPKPRVSIRKSVDLLHASHTGQEPSERHTEEALRKF) are disordered. Basic and acidic residues predominate over residues 1236-1248 (PSERHTEEALRKF).

In terms of assembly, isoform 3 interacts with DLG4. Interacts with EPHA8. Isoform 2 interacts with COIL. Isoform 4 interacts with APP and EPHA8. Isoform 6 interacts with EPHA8. In terms of processing, isoform 3 nuclear translocation requires an NMDAR-dependent proteolytic cleavage. Highly expressed in marrow from patients with pre-B ALL associated with the t(1;19) translocation. Strongly expressed in brain and testis. Expressed in fetal brain. Isoform 4 is highly expressed in brain (at protein level). Isoform 6 is expressed in brain and several cancer cell lines.

The protein localises to the cytoplasm. It localises to the nucleus. It is found in the postsynaptic density. The protein resides in the cell projection. Its subcellular location is the dendritic spine. The protein localises to the cajal body. Isoform 2 may participate in the regulation of nucleoplasmic coilin protein interactions in neuronal and transformed cells. Functionally, isoform 3 can regulate global protein synthesis by altering nucleolar numbers. In terms of biological role, isoform 4 may play a role as a modulator of APP processing. Overexpression can down-regulate APP processing. In Homo sapiens (Human), this protein is Ankyrin repeat and sterile alpha motif domain-containing protein 1B (ANKS1B).